Reading from the N-terminus, the 469-residue chain is 3-isopropylmalate dehydratase large subunit (469 aa).

[4Fe-4S] cluster contacts are provided by cysteine 347, cysteine 407, and cysteine 410.

This sequence belongs to the aconitase/IPM isomerase family. LeuC type 1 subfamily. In terms of assembly, heterodimer of LeuC and LeuD. It depends on [4Fe-4S] cluster as a cofactor.

It catalyses the reaction (2R,3S)-3-isopropylmalate = (2S)-2-isopropylmalate. It participates in amino-acid biosynthesis; L-leucine biosynthesis; L-leucine from 3-methyl-2-oxobutanoate: step 2/4. Functionally, catalyzes the isomerization between 2-isopropylmalate and 3-isopropylmalate, via the formation of 2-isopropylmaleate. The protein is 3-isopropylmalate dehydratase large subunit of Prochlorococcus marinus subsp. pastoris (strain CCMP1986 / NIES-2087 / MED4).